A 270-amino-acid chain; its full sequence is Fructose-2,6-bisphosphatase TIGAR (270 aa).

His-11 (tele-phosphohistidine intermediate) is an active-site residue. Position 50 is an N6-acetyllysine (Lys-50). Residue Glu-89 is the Proton donor/acceptor of the active site.

Belongs to the phosphoglycerate mutase family. As to quaternary structure, interacts with HK2; the interaction increases hexokinase HK2 activity in a hypoxia- and HIF1A-dependent manner, resulting in the regulation of mitochondrial membrane potential, thus increasing NADPH production and decreasing intracellular ROS levels.

It is found in the cytoplasm. Its subcellular location is the nucleus. The protein localises to the mitochondrion. It carries out the reaction beta-D-fructose 2,6-bisphosphate + H2O = beta-D-fructose 6-phosphate + phosphate. Functionally, fructose-bisphosphatase hydrolyzing fructose-2,6-bisphosphate as well as fructose-1,6-bisphosphate. Acts as a negative regulator of glycolysis by lowering intracellular levels of fructose-2,6-bisphosphate in a p53/TP53-dependent manner, resulting in the pentose phosphate pathway (PPP) activation and NADPH production. Contributes to the generation of reduced glutathione to cause a decrease in intracellular reactive oxygen species (ROS) content, correlating with its ability to protect cells from oxidative or metabolic stress-induced cell death. Plays a role in promoting protection against cell death during hypoxia by decreasing mitochondria ROS levels in a HK2-dependent manner through a mechanism that is independent of its fructose-bisphosphatase activity. In response to cardiac damage stress, mediates p53-induced inhibition of myocyte mitophagy through ROS levels reduction and the subsequent inactivation of BNIP3. Reduced mitophagy results in an enhanced apoptotic myocyte cell death, and exacerbates cardiac damage. Plays a role in adult intestinal regeneration; contributes to the growth, proliferation and survival of intestinal crypts following tissue ablation. Plays a neuroprotective role against ischemic brain damage by enhancing PPP flux and preserving mitochondria functions. Protects glioma cells from hypoxia- and ROS-induced cell death by inhibiting glycolysis and activating mitochondrial energy metabolism and oxygen consumption in a TKTL1-dependent and p53/TP53-independent manner. Plays a role in cancer cell survival by promoting DNA repair through activating PPP flux in a CDK5-ATM-dependent signaling pathway during hypoxia and/or genome stress-induced DNA damage responses. Involved in intestinal tumor progression. This chain is Fructose-2,6-bisphosphatase TIGAR, found in Bos taurus (Bovine).